Consider the following 168-residue polypeptide: DNA-binding protein inhibitor ID-1 (168 aa).

In terms of domain architecture, bHLH spans 46–98 (LPALLDEQQVNVLLYDMNGCYSRLKELVPTLPQNRKVSKVEILQHVIDYIRDL). The interval 53–106 (QQVNVLLYDMNGCYSRLKELVPTLPQNRKVSKVEILQHVIDYIRDLQLELNSES) is interaction with IFI204. The Nuclear export signal signature appears at 91-104 (VIDYIRDLQLELNS).

Heterodimer with other HLH proteins. Interacts with CLOCK and BMAL1. Interacts with COPS5, IFI204, GATA4 and NKX2-5. Post-translationally, polyubiquitinated; which is favored by Ifi204 and leads to proteasomal degradation.

Its subcellular location is the cytoplasm. The protein resides in the nucleus. In terms of biological role, transcriptional regulator (lacking a basic DNA binding domain) which negatively regulates the basic helix-loop-helix (bHLH) transcription factors by forming heterodimers and inhibiting their DNA binding and transcriptional activity. Implicated in regulating a variety of cellular processes, including cellular growth, senescence, differentiation, apoptosis, angiogenesis, and neoplastic transformation. Inhibits skeletal muscle and cardiac myocyte differentiation. Regulates the circadian clock by repressing the transcriptional activator activity of the CLOCK-BMAL1 heterodimer. This is DNA-binding protein inhibitor ID-1 (Id1) from Mus musculus (Mouse).